The chain runs to 832 residues: Tuftelin-interacting protein 11 (832 aa).

Disordered stretches follow at residues 1–21 (MSMS…GVEI) and 33–145 (NEFN…GNWE). 2 stretches are compositionally biased toward basic and acidic residues: residues 36–49 (NPDR…KEEA) and 88–99 (TAAEEKAEREGS). Residues 121 to 130 (TGGSFKTSQR) show a composition bias toward polar residues. One can recognise a G-patch domain in the interval 148–194 (TRGIGQKLLQKMGYVPGKGLGKNAQGIVNPIEAKLRKGKGAVGAYGS). S209 carries the post-translational modification Phosphoserine.

It belongs to the TFP11/STIP family. As to quaternary structure, identified in the spliceosome C complex.

The protein resides in the nucleus. Its function is as follows. Involved in pre-mRNA splicing, specifically in spliceosome disassembly during late-stage splicing events. This chain is Tuftelin-interacting protein 11 (tfip11), found in Danio rerio (Zebrafish).